The following is a 574-amino-acid chain: Potassium-transporting ATPase potassium-binding subunit (574 aa).

Helical transmembrane passes span 7-27, 65-85, 136-156, 175-195, 264-284, 292-312, 390-410, 427-447, 494-514, and 534-554; these read IELGLFIALLAVLNIPLGTHL, IEYAVGLLCFNFVGILVSYLI, FGLAVPNFTSAATGIAAAAAL, LIRIHYYLLLPLSLFIAIILL, FVEMLSIFLIPSALTYYFGLS, WSIWLTMTFCFLILTLSCFIF, GLYGILLFVILSVFLFGLMIG, MAVLALMIQYVLILGLSALAL, LLLGVAMFLGRYFVLIPILAI, and GWLFIFVLGATIFLLAALNFF.

Belongs to the KdpA family. In terms of assembly, the system is composed of three essential subunits: KdpA, KdpB and KdpC.

The protein resides in the cell inner membrane. In terms of biological role, part of the high-affinity ATP-driven potassium transport (or Kdp) system, which catalyzes the hydrolysis of ATP coupled with the electrogenic transport of potassium into the cytoplasm. This subunit binds the periplasmic potassium ions and delivers the ions to the membrane domain of KdpB through an intramembrane tunnel. This is Potassium-transporting ATPase potassium-binding subunit from Methylacidiphilum infernorum (isolate V4) (Methylokorus infernorum (strain V4)).